A 229-amino-acid chain; its full sequence is UPF0758 protein CLH_0547 (229 aa).

An MPN domain is found at 107-229; that stretch reads KIMSPNDIAM…FISLKEKGFI (123 aa). The Zn(2+) site is built by histidine 178, histidine 180, and aspartate 191. The short motif at 178 to 191 is the JAMM motif element; the sequence is HNHPSGDPTPSKED.

The protein belongs to the UPF0758 family.

The protein is UPF0758 protein CLH_0547 of Clostridium botulinum (strain Alaska E43 / Type E3).